Here is a 119-residue protein sequence, read N- to C-terminus: Protein Wnt-4 (119 aa).

Serine 1 carries the O-palmitoleoyl serine; by PORCN lipid modification. Disulfide bonds link cysteine 69–cysteine 100 and cysteine 85–cysteine 95. The N-linked (GlcNAc...) asparagine glycan is linked to asparagine 86.

It belongs to the Wnt family. Palmitoleoylation is required for efficient binding to frizzled receptors. Depalmitoleoylation leads to Wnt signaling pathway inhibition.

The protein localises to the secreted. It is found in the extracellular space. Its subcellular location is the extracellular matrix. Ligand for members of the frizzled family of seven transmembrane receptors. Plays an important role in embryonic development. The polypeptide is Protein Wnt-4 (WNT4) (Meleagris gallopavo (Wild turkey)).